Reading from the N-terminus, the 117-residue chain is Large ribosomal subunit protein eL34 (117 aa).

Position 12 is a phosphoserine (Ser12). N6-acetyllysine is present on residues Lys36 and Lys43. Lys108 participates in a covalent cross-link: Glycyl lysine isopeptide (Lys-Gly) (interchain with G-Cter in SUMO2).

The protein belongs to the eukaryotic ribosomal protein eL34 family. In terms of assembly, component of the large ribosomal subunit.

The protein localises to the cytoplasm. It localises to the cytosol. Its subcellular location is the endoplasmic reticulum. Functionally, component of the large ribosomal subunit. The ribosome is a large ribonucleoprotein complex responsible for the synthesis of proteins in the cell. This Sus scrofa (Pig) protein is Large ribosomal subunit protein eL34 (RPL34).